We begin with the raw amino-acid sequence, 66 residues long: ATP synthase subunit c (66 aa).

The next 2 membrane-spanning stretches (helical) occupy residues 3-23 (LTFL…GLLM) and 45-65 (FLGV…SFII).

The protein belongs to the ATPase C chain family. In terms of assembly, F-type ATPases have 2 components, F(1) - the catalytic core - and F(0) - the membrane proton channel. F(1) has five subunits: alpha(3), beta(3), gamma(1), delta(1), epsilon(1). F(0) has three main subunits: a(1), b(2) and c(10-14). The alpha and beta chains form an alternating ring which encloses part of the gamma chain. F(1) is attached to F(0) by a central stalk formed by the gamma and epsilon chains, while a peripheral stalk is formed by the delta and b chains.

The protein resides in the cell membrane. In terms of biological role, f(1)F(0) ATP synthase produces ATP from ADP in the presence of a proton or sodium gradient. F-type ATPases consist of two structural domains, F(1) containing the extramembraneous catalytic core and F(0) containing the membrane proton channel, linked together by a central stalk and a peripheral stalk. During catalysis, ATP synthesis in the catalytic domain of F(1) is coupled via a rotary mechanism of the central stalk subunits to proton translocation. Its function is as follows. Key component of the F(0) channel; it plays a direct role in translocation across the membrane. A homomeric c-ring of between 10-14 subunits forms the central stalk rotor element with the F(1) delta and epsilon subunits. The polypeptide is ATP synthase subunit c (Streptococcus pneumoniae serotype 19F (strain G54)).